A 463-amino-acid chain; its full sequence is A-type ATP synthase subunit B (463 aa).

This sequence belongs to the ATPase alpha/beta chains family. Has multiple subunits with at least A(3), B(3), C, D, E, F, H, I and proteolipid K(x).

The protein localises to the cell membrane. Functionally, component of the A-type ATP synthase that produces ATP from ADP in the presence of a proton gradient across the membrane. The B chain is a regulatory subunit. The polypeptide is A-type ATP synthase subunit B (Aeropyrum pernix (strain ATCC 700893 / DSM 11879 / JCM 9820 / NBRC 100138 / K1)).